Consider the following 164-residue polypeptide: Transmembrane protein B169L (164 aa).

Helical transmembrane passes span Asn-28–Cys-48 and Thr-60–Asn-80. An N-linked (GlcNAc...) asparagine; by host glycan is attached at Asn-88. The segment at Ser-114–Ala-142 is disordered.

This sequence belongs to the asfivirus B169L family.

The protein localises to the host membrane. It is found in the virion. The protein is Transmembrane protein B169L of Ornithodoros (relapsing fever ticks).